Reading from the N-terminus, the 141-residue chain is Hemoglobin subunit alpha (141 aa).

The Globin domain maps to 1–141; that stretch reads VLSAADKANV…VSTVLTSKYR (141 aa). Phosphoserine is present on S3. N6-succinyllysine occurs at positions 7 and 11. An N6-acetyllysine; alternate modification is found at K16. K16 bears the N6-succinyllysine; alternate mark. K40 carries the N6-succinyllysine modification. S49 is modified (phosphoserine). Position 58 (H58) interacts with O2. Heme b is bound at residue H87. At S102 the chain carries Phosphoserine. Position 108 is a phosphothreonine (T108). S124 is subject to Phosphoserine. T134 and T137 each carry phosphothreonine. Residue S138 is modified to Phosphoserine.

It belongs to the globin family. Heterotetramer of two alpha chains and two beta chains. In terms of tissue distribution, red blood cells.

Involved in oxygen transport from the lung to the various peripheral tissues. Functionally, hemopressin acts as an antagonist peptide of the cannabinoid receptor CNR1. Hemopressin-binding efficiently blocks cannabinoid receptor CNR1 and subsequent signaling. This is Hemoglobin subunit alpha (HBA) from Sus scrofa (Pig).